We begin with the raw amino-acid sequence, 325 residues long: Small ribosomal subunit protein uS2 (325 aa).

Residues 212–226 are compositionally biased toward basic and acidic residues; the sequence is KEEQAKAEAERERLA. Residues 212-325 are disordered; sequence KEEQAKAEAE…TEPKASTGNW (114 aa). Low complexity-rich tracts occupy residues 234–247 and 261–289; these read QPAAPQQDPDQWAD and PVTTAPVPTGGAPPVASTTATPATNTGSG. Residues 290-300 show a composition bias toward polar residues; that stretch reads FNQDDWSVPTT.

It belongs to the universal ribosomal protein uS2 family. Component of the small ribosomal subunit. Mature ribosomes consist of a small (40S) and a large (60S) subunit. The 40S subunit contains about 33 different proteins and 1 molecule of RNA (18S). The 60S subunit contains about 49 different proteins and 3 molecules of RNA (28S, 5.8S and 5S). Interacts with ribosomal protein S21.

It localises to the cytoplasm. Functionally, required for the assembly and/or stability of the 40S ribosomal subunit. Required for the processing of the 20S rRNA-precursor to mature 18S rRNA in a late step of the maturation of 40S ribosomal subunits. The protein is Small ribosomal subunit protein uS2 of Suberites domuncula (Sponge).